A 52-amino-acid chain; its full sequence is Phospholamban (52 aa).

Position 1 is an N-acetylmethionine (methionine 1). The Cytoplasmic segment spans residues 1-31 (MEKVQYLTRSAIRRASTIEMPQQARQNLQNL). Serine 16 carries the post-translational modification Phosphoserine; by PKA. Threonine 17 bears the Phosphothreonine; by CaMK2 mark. The chain crosses the membrane as a helical span at residues 32–52 (FINFCLILICLLLICIIVMLL). A lipid anchor (S-palmitoyl cysteine) is attached at cysteine 36.

The protein belongs to the phospholamban family. Homopentamer. Can also form heterooligomers with other sarcoplasmic/endoplasmic reticulum calcium ATPase (SERCA) regulators ARLN, ERLN, SLN and STRIT1/DWORF. Monomer. Interacts with HAX1. Interacts as a monomer with ATP2A2; the interaction decreases ATP2A2 Ca(2+) affinity. Interacts with VMP1; VMP1 competes with PLN and SLN to prevent them from forming an inhibitory complex with ATP2A2. Interacts with S100A1 in a Ca(2+)-dependent manner. Post-translationally, phosphorylated at Thr-17 by CaMK2, and in response to beta-adrenergic stimulation. Phosphorylation by DMPK may stimulate sarcoplasmic reticulum calcium uptake in cardiomyocytes. Phosphorylation by PKA abolishes the inhibition of ATP2A2-mediated calcium uptake. In terms of processing, palmitoylated by ZDHHC16, promoting formation of the homopentamer. In elongated spermatids, proteolytically cleaved by SPPL2C which modulates intracellular Ca(2+) homeostasis. Expressed in testis (at protein level). In brain, expressed specifically in GABAergic GAD67+ neurons of the thalamic reticular nucleus where it colocalizes with ATP2A2/SERCA2 (at protein level). Expressed in the bladder and in the atria and ventricles of the heart.

It is found in the endoplasmic reticulum membrane. Its subcellular location is the sarcoplasmic reticulum membrane. It localises to the mitochondrion membrane. The protein resides in the membrane. Its function is as follows. Reversibly inhibits the activity of ATP2A2/SERCA2 in cardiac sarcoplasmic reticulum by decreasing the apparent affinity of the ATPase for Ca(2+). Binds preferentially to the ATP-bound E1 conformational form of ATP2A2 which predominates at low Ca(2+) concentrations during the diastolic phase of the cardiac cycle. Inhibits ATP2A2 Ca(2+) affinity by disrupting its allosteric activation by ATP. Modulates the contractility of the heart muscle in response to physiological stimuli via its effects on ATP2A2. Modulates calcium re-uptake during muscle relaxation and plays an important role in calcium homeostasis in the heart muscle. The degree of ATP2A2 inhibition depends on the oligomeric state of PLN. ATP2A2 inhibition is alleviated by PLN phosphorylation. Also inhibits the activity of ATP2A3/SERCA3. Controls intracellular Ca(2+) levels in elongated spermatids and may play a role in germ cell differentiation. In the thalamic reticular nucleus of the brain, plays a role in the regulation of sleep patterns and executive functioning. The polypeptide is Phospholamban (Mus musculus (Mouse)).